The following is a 299-amino-acid chain: 6-phosphogluconate dehydrogenase, NAD(+)-dependent, decarboxylating (299 aa).

Residues 7-12, 67-69, and N95 contribute to the NAD(+) site; these read GLGRMG and VPA. Substrate contacts are provided by N95, S118, and G120. K169 functions as the Proton acceptor in the catalytic mechanism. Substrate is bound at residue 172–173; that stretch reads HN. E176 acts as the Proton donor in catalysis. Positions 177 and 268 each coordinate substrate.

The protein belongs to the 6-phosphogluconate dehydrogenase family. Homotetramer.

The enzyme catalyses 6-phospho-D-gluconate + NAD(+) = D-ribulose 5-phosphate + CO2 + NADH. Its pathway is carbohydrate degradation; pentose phosphate pathway. Catalyzes the oxidative decarboxylation of 6-phosphogluconate to ribulose 5-phosphate and CO(2), with concomitant reduction of NAD to NADH. This chain is 6-phosphogluconate dehydrogenase, NAD(+)-dependent, decarboxylating, found in Haloferax volcanii (strain ATCC 29605 / DSM 3757 / JCM 8879 / NBRC 14742 / NCIMB 2012 / VKM B-1768 / DS2) (Halobacterium volcanii).